Reading from the N-terminus, the 245-residue chain is Biosynthetic peptidoglycan transglycosylase (245 aa).

A helical membrane pass occupies residues Val20–Ala42.

It belongs to the glycosyltransferase 51 family.

The protein localises to the cell inner membrane. It catalyses the reaction [GlcNAc-(1-&gt;4)-Mur2Ac(oyl-L-Ala-gamma-D-Glu-L-Lys-D-Ala-D-Ala)](n)-di-trans,octa-cis-undecaprenyl diphosphate + beta-D-GlcNAc-(1-&gt;4)-Mur2Ac(oyl-L-Ala-gamma-D-Glu-L-Lys-D-Ala-D-Ala)-di-trans,octa-cis-undecaprenyl diphosphate = [GlcNAc-(1-&gt;4)-Mur2Ac(oyl-L-Ala-gamma-D-Glu-L-Lys-D-Ala-D-Ala)](n+1)-di-trans,octa-cis-undecaprenyl diphosphate + di-trans,octa-cis-undecaprenyl diphosphate + H(+). It functions in the pathway cell wall biogenesis; peptidoglycan biosynthesis. In terms of biological role, peptidoglycan polymerase that catalyzes glycan chain elongation from lipid-linked precursors. The polypeptide is Biosynthetic peptidoglycan transglycosylase (Burkholderia ambifaria (strain MC40-6)).